A 449-amino-acid chain; its full sequence is Type 3 secretion system ATPase (449 aa).

178 to 183 serves as a coordination point for ATP; the sequence is GCGKTT.

Belongs to the ATPase alpha/beta chains family. T3SS ATPase subfamily. In terms of assembly, the core secretion machinery of the T3SS is composed of approximately 20 different proteins, including cytoplasmic components, a base, an export apparatus and a needle. This subunit is part of the cytosolic complex. Forms homododecamers.

Its subcellular location is the cytoplasm. It catalyses the reaction ATP + H2O + cellular proteinSide 1 = ADP + phosphate + cellular proteinSide 2.. Its function is as follows. ATPase component of the type III secretion system (T3SS), also called injectisome, which is used to inject bacterial effector proteins into eukaryotic host cells. Acts as a molecular motor to provide the energy that is required for the export of proteins. Required for type III secretion apparatus (T3SA) formation, proper protein secretion, host cell invasion and virulence. May play a critical role in T3SS substrate recognition, disassembly of the effector/chaperone complex and unfolding of the effector in an ATP-dependent manner prior to secretion. The protein is Type 3 secretion system ATPase of Pseudomonas syringae pv. syringae.